A 300-amino-acid polypeptide reads, in one-letter code: Ribosomal protein bS6--L-glutamate ligase (300 aa).

The ATP-grasp domain maps to 104-287; the sequence is MQLLARQGID…IASKMIRWIE (184 aa). Residues Lys-141, 178 to 179, Asp-187, and 211 to 213 each bind ATP; these read EY and RSN. Residues Asp-248, Glu-260, and Asn-262 each coordinate Mg(2+). Residues Asp-248, Glu-260, and Asn-262 each contribute to the Mn(2+) site.

It belongs to the RimK family. Mg(2+) is required as a cofactor. Mn(2+) serves as cofactor.

In terms of biological role, an L-glutamate ligase that catalyzes the ATP-dependent post-translational addition of glutamate residues to the C-terminus of ribosomal protein bS6 (RpsF). Is also able to catalyze the synthesis of poly-alpha-glutamate in vitro, via ATP hydrolysis from unprotected glutamate as substrate. The number of glutamate residues added to either RpsF or to poly-alpha-glutamate changes with pH. This Escherichia coli O81 (strain ED1a) protein is Ribosomal protein bS6--L-glutamate ligase.